A 176-amino-acid chain; its full sequence is Inner membrane-spanning protein YciB (176 aa).

Helical transmembrane passes span 3-23 (FLFD…WGIF), 49-69 (TMLW…LVLH), 72-92 (KFIQ…LVAA), 118-138 (KLNL…LYVV), and 149-169 (FKLF…SLWL).

The protein belongs to the YciB family.

The protein resides in the cell inner membrane. Functionally, plays a role in cell envelope biogenesis, maintenance of cell envelope integrity and membrane homeostasis. The polypeptide is Inner membrane-spanning protein YciB (Burkholderia thailandensis (strain ATCC 700388 / DSM 13276 / CCUG 48851 / CIP 106301 / E264)).